Consider the following 124-residue polypeptide: MYRTRGFIYPAVLFVSALVLLIVNFVAAQYISRCMFEKETKELYIGENLLQNGVLLSIRHVLEERKGQEGTQQFLYGRVSYYIHDTSIKEQKEINLRVSTDSGTERTAQIVFDQKQKKLLRWTE.

An N-terminal signal peptide occupies residues Met1–Ala28.

As to quaternary structure, the transformation pili are flexible filaments, consisting mainly of the major pilin ComGC and smaller amounts of the minor pilins, including at least ComGD, ComGF and ComGG. Interacts with ComGC; the interaction is probably direct. Interacts with ComGD. Interacts with ComGF. May act as a link between ComGC, ComGD and ComGF. Homodimer; disulfide-linked. A minor fraction of ComGG is found as a disulfide-bonded homodimer. Partial processing of ComGG in competent cells requires ComC.

The protein localises to the cell membrane. It is found in the secreted. Required for formation of the type IV-like pilus (T4P) that plays a role in transformation. Transformation pili are dynamically extended and retracted, perhaps thereby promoting DNA uptake and transformation. Required for transformation and DNA binding. This is Competence protein ComGG (comGG) from Bacillus subtilis (strain 168).